The sequence spans 956 residues: Transient receptor potential channel pyrexia (956 aa).

The Cytoplasmic segment spans residues 1–491; it reads MENVRFSIIE…LFLKWRRIRK (491 aa). ANK repeat units follow at residues 132-161, 166-195, 198-227, 231-260, 265-294, 298-327, 331-362, and 366-395; these read RGRT…DPNR, KEVT…SINI, EKRS…DPNT, YTET…DVRS, GKVT…EVDC, SHQT…NVNA, DGRT…DVNK, and YGYT…DITA. Residues 492–512 form a helical membrane-spanning segment; the sequence is FFLMSLAYHTLFVILFTFYVI. The Extracellular portion of the chain corresponds to 513-525; sequence WVYVRCCKKEELC. A helical membrane pass occupies residues 526–546; sequence VAPGYVSTIGYLVIILNLILL. Topologically, residues 547–565 are cytoplasmic; sequence GKEVFQMAHGLRGYAKYWE. A helical membrane pass occupies residues 566 to 584; sequence NWLQWTIGTGVLLCVTPET. Residues 585–601 are Extracellular-facing; sequence VRTDDLTAVPVWQHHVA. Residues 602-622 form a helical membrane-spanning segment; it reads AIVILLVWLELMMLVGRFPIF. Topologically, residues 623 to 638 are cytoplasmic; it reads GVYVQMFTKVAVNFAK. A helical transmembrane segment spans residues 639 to 659; that stretch reads FLLAYICLLVAFGLSFAVLFN. Topologically, residues 660 to 701 are extracellular; that stretch reads DYPAFENITWSFLKSITMMSGELEFEDIFYGDYAVKFPVTAH. N666 carries an N-linked (GlcNAc...) asparagine glycan. A helical membrane pass occupies residues 702–722; that stretch reads IIFLSFVLLVTVILTNLMVGL. At 723-956 the chain is on the cytoplasmic side; it reads AVSDIQGLQV…VASSHIRRHR (234 aa).

It belongs to the transient receptor (TC 1.A.4) family. STrpC subfamily. In terms of assembly, homooligomer; between isoform A and isoform B. Expressed in various peripheral nerves and the central nerves in embryos. In adults, it is expressed in sensory neurons lying beneath the bristles around eyes, neurons innervating the bristles on the back of thorax and neurons in maxillary palps, proboscis and antennae. Expressed in multidendritic neurons, which mediate temperature sensing, as well as non-multidendritic neurons in larval epidermis. Localizes ubiquitously throughout neurites.

The protein localises to the membrane. Functionally, receptor-activated non-selective cation channel involved in protection or tolerance from high temperature stress. Activated by temperatures above 40 degrees Celsius. More permeable to K(+) than to Na(+). May act in stress protection allow flies to survive in natural environments. In Drosophila melanogaster (Fruit fly), this protein is Transient receptor potential channel pyrexia (pyx).